We begin with the raw amino-acid sequence, 468 residues long: Mothers against decapentaplegic homolog 1 (468 aa).

Met1 is modified (N-acetylmethionine). An MH1 domain is found at 12-136; sequence PAVKRLLGWK…YKRVESPVLP (125 aa). Positions 64, 109, 121, and 126 each coordinate Zn(2+). The tract at residues 162–246 is disordered; sequence NEPHMPLNAT…DGSQPMDTNM (85 aa). The segment covering 188–210 has biased composition (low complexity); sequence PNSSYPNSPGSSSSTYPHSPTSS. The span at 221–232 shows a compositional bias: pro residues; that stretch reads DTPPPAYLPPED. The span at 237-246 shows a compositional bias: polar residues; that stretch reads DGSQPMDTNM. The MH2 domain occupies 274–468; it reads WCSIVYYELN…SPHNPISSVS (195 aa). Thr325 is modified (phosphothreonine; by MINK1, TNIK and MAP4K4). Positions 421–431 are L3 loop; the sequence is KGWGAEYHRQD. Phosphoserine is present on residues Ser466 and Ser468.

It belongs to the dwarfin/SMAD family. In terms of assembly, found in a complex with SMAD4 and YY1. Interacts with HGS, NANOG and ZCCHC12. Upon C-terminus phosphorylation: forms trimers with another SMAD1 and the co-SMAD SMAD4. Interacts with PEBP2-alpha subunit, CREB-binding protein (CBP), p300, SMURF1, SMURF2, USP15 and HOXC8. Associates with ZNF423 or ZNF521 in response to BMP2 leading to activate transcription of BMP target genes. Interacts with SKOR1. Interacts (via MH2 domain) with LEMD3. Binding to LEMD3 results in at least a partial reduction of receptor-mediated phosphorylation. Forms a ternary complex with PSMB4 and OAZ1 before PSMB4 is incorporated into the 20S proteasome. Interacts (via MH2 domain) with FAM83G (via MH2 domain); in a SMAD4-independent manner. Interacts with ZC3H3. Interacts with TMEM119. Interacts (via MH1 and MH2 domains) with ZNF8. Interacts with RANBP3L; the interaction increases when SMAD1 is not phosphorylated and mediates SMAD1 nuclear export. Interacts with EGR1; this interaction inhibits SMAD1 dephosphorylation. Interacts with SMAD6. Interacts with YAP1. Interacts with MTMR4; negatively regulates BMP signaling through SMAD1 dephosphorylation and retention in endosomes. Phosphorylation of the C-terminal SVS motif by BMP type 1 receptor kinase activates SMAD1 by promoting dissociation from the receptor and trimerization with SMAD4. Phosphorylation by ERK2 MAP kinase in response to EGF or HGF prevents SMAD1 nuclear accumulation and transcriptional activity in response to BMP. Dephosphorylation, probably by PPM1A, induces its export from the nucleus to the cytoplasm. Dephosphorylation is inhibited by association with EGR1. Phosphorylation by CDK8/9 creates binding sites for YAP1, and subsequent phosphorylation by GSK3 switches off YAP1 binding and adds binding sites for SMURF1. In terms of processing, ubiquitinated by SMAD-specific E3 ubiquitin ligase SMURF1, leading to its degradation. Monoubiquitinated, leading to prevent DNA-binding. Deubiquitination by USP15 alleviates inhibition and promotes activation of TGF-beta target genes. Dephosphorylation, probably by PPM1A, induces its export from the nucleus to the cytoplasm. Phospho-SMAD1 is ubiquitinated by CHIP leading to disruption of the SMAD1-SMAD4 complex. As to expression, ubiquitous; present in liver, lung, stomach and spleen with lower level in heart, testes and skeletal muscle.

The protein localises to the cytoplasm. The protein resides in the nucleus. In terms of biological role, transcriptional modulator that plays a role in various cellular processes, including embryonic development, cell differentiation, and tissue homeostasis. Upon BMP ligand binding to their receptors at the cell surface, is phosphorylated by activated type I BMP receptors (BMPRIs) and associates with SMAD4 to form an heteromeric complex which translocates into the nucleus acting as transcription factor. In turn, the hetero-trimeric complex recognizes cis-regulatory elements containing Smad Binding Elements (SBEs) to modulate the outcome of the signaling network. SMAD1/OAZ1/PSMB4 complex mediates the degradation of the CREBBP/EP300 repressor SNIP1. Positively regulates BMP4-induced expression of odontogenic development regulator MSX1 following IPO7-mediated nuclear import. The protein is Mothers against decapentaplegic homolog 1 (Smad1) of Rattus norvegicus (Rat).